A 219-amino-acid chain; its full sequence is Small ribosomal subunit protein uS3 (219 aa).

Residues 41–110 (IRKIINTEYS…DVSINICEVK (70 aa)) form the KH type-2 domain.

The protein belongs to the universal ribosomal protein uS3 family. Part of the 30S ribosomal subunit. Forms a tight complex with proteins S10 and S14.

Its function is as follows. Binds the lower part of the 30S subunit head. Binds mRNA in the 70S ribosome, positioning it for translation. The sequence is that of Small ribosomal subunit protein uS3 from Orientia tsutsugamushi (strain Ikeda) (Rickettsia tsutsugamushi).